The primary structure comprises 424 residues: Proline--tRNA ligase (424 aa).

The protein belongs to the class-II aminoacyl-tRNA synthetase family. ProS type 2 subfamily. As to quaternary structure, homodimer.

The protein localises to the cytoplasm. It carries out the reaction tRNA(Pro) + L-proline + ATP = L-prolyl-tRNA(Pro) + AMP + diphosphate. Its function is as follows. Catalyzes the attachment of proline to tRNA(Pro) in a two-step reaction: proline is first activated by ATP to form Pro-AMP and then transferred to the acceptor end of tRNA(Pro). This Ehrlichia chaffeensis (strain ATCC CRL-10679 / Arkansas) protein is Proline--tRNA ligase.